We begin with the raw amino-acid sequence, 663 residues long: Alpha-amylase MalA (663 aa).

Disordered regions lie at residues 1 to 28 (MHHP…PTAT) and 80 to 135 (GTLE…LTLR). Over residues 92 to 111 (RSGGHSGGVSGGRSGPGRSG) the composition is skewed to gly residues. Residue Asp411 is the Nucleophile of the active site. Glu440 (proton donor) is an active-site residue.

This sequence belongs to the glycosyl hydrolase 13 family.

The protein resides in the cytoplasm. The enzyme catalyses Endohydrolysis of (1-&gt;4)-alpha-D-glucosidic linkages in polysaccharides containing three or more (1-&gt;4)-alpha-linked D-glucose units.. Its pathway is glycan degradation; starch degradation. Stable and active over a broad range of NaCl concentrations (0.5 to 4.2 M NaCl), with maximal activity at 2.6 M NaCl. 83% and 94% of the maximum activity at 0.6 and 4.2 M NaCl, respectively. Active and stable also in KCl. Alpha-amylase that cleaves starch into oligosaccharides, the first step in starch degradation. Endo-acting enzyme which prefers a linear polysaccharide to branched polysaccharides hydrolyzing alpha-1,4 glucosidic bonds efficiently. Also has transglycosylation activity, but does not act on alpha-1,6 bonds. Higher activities of 100%, 79% and 67.8% against amylose, soluble starch and amylopectin, respectively. Lower activity of 22% against glycogen and faint or no activity against alpha-, beta- and gamma-cyclodextrin. In Haloarcula japonica (strain ATCC 49778 / DSM 6131 / JCM 7785 / NBRC 101032 / NCIMB 13157 / TR-1), this protein is Alpha-amylase MalA.